The chain runs to 373 residues: Lipoyl synthase, mitochondrial (373 aa).

Residues 1-26 (MALRCWDAARSLGSRIFGRYACSVRA) constitute a mitochondrion transit peptide. [4Fe-4S] cluster is bound by residues Cys105, Cys110, Cys116, Cys136, Cys140, Cys143, and Ser351. The Radical SAM core domain occupies 121–340 (EYATATATIM…EEVGNELGFH (220 aa)).

The protein belongs to the radical SAM superfamily. Lipoyl synthase family. Requires [4Fe-4S] cluster as cofactor.

It is found in the mitochondrion. The enzyme catalyses [[Fe-S] cluster scaffold protein carrying a second [4Fe-4S](2+) cluster] + N(6)-octanoyl-L-lysyl-[protein] + 2 oxidized [2Fe-2S]-[ferredoxin] + 2 S-adenosyl-L-methionine + 4 H(+) = [[Fe-S] cluster scaffold protein] + N(6)-[(R)-dihydrolipoyl]-L-lysyl-[protein] + 4 Fe(3+) + 2 hydrogen sulfide + 2 5'-deoxyadenosine + 2 L-methionine + 2 reduced [2Fe-2S]-[ferredoxin]. It functions in the pathway protein modification; protein lipoylation via endogenous pathway; protein N(6)-(lipoyl)lysine from octanoyl-[acyl-carrier-protein]: step 2/2. In terms of biological role, catalyzes the radical-mediated insertion of two sulfur atoms into the C-6 and C-8 positions of the octanoyl moiety bound to the lipoyl domains of lipoate-dependent enzymes, thereby converting the octanoylated domains into lipoylated derivatives. The protein is Lipoyl synthase, mitochondrial (Lias) of Rattus norvegicus (Rat).